Consider the following 433-residue polypeptide: Tol-Pal system protein TolB (433 aa).

The signal sequence occupies residues 1–21 (MINLFRGLLVVLCFASAMVAA).

Belongs to the TolB family. In terms of assembly, the Tol-Pal system is composed of five core proteins: the inner membrane proteins TolA, TolQ and TolR, the periplasmic protein TolB and the outer membrane protein Pal. They form a network linking the inner and outer membranes and the peptidoglycan layer.

The protein resides in the periplasm. In terms of biological role, part of the Tol-Pal system, which plays a role in outer membrane invagination during cell division and is important for maintaining outer membrane integrity. This is Tol-Pal system protein TolB from Pseudomonas syringae pv. tomato (strain ATCC BAA-871 / DC3000).